Consider the following 786-residue polypeptide: MGLQPLEFSDCYLDSPWFRERIRAHEAELERTNKFIKELIKDGKNLISATKSLSAAQRKFAHSLRDFKFEFIGDAETDDERCIDASLREFSNFLKNLEEQREIMALSVTETLIKPLEKFRKEQLGAVKEEKKKFDKETEKNYSLIDKHLTLSARKKDSHLQEADLQVEQNRQHFYELSLEYVCKLQEIQERKKFEFVEPMLSFFQGMFTFYHQGHELSKDFNHYKMELQINIQNTRNRFEGTRSEVEELMNKIRQNPKDQKRASQFTAEGYLYVQEKRPAPFGSSWVKHYCMYRKTAKKFNMIPFEHRSGGKLGDGEAFFLKECTKRHMDSTDRRFCFDIEAADRPGVPLTVQAFSEEERKQWLEALGGKEALFHTFNRAIVPRPEGGAQLDKMGFTILRKCISAVETRGINDQGLYRVVGVSSKVQRLLSMLMDVKMCNELDLENSADWEVKTVTSALKQYLRSLPEPLMTYELHRDFIVPAKSGSPESRVNAIHFLVHKLPEKNKEMLDILVKHLTNVSSHSKQNLMTVANLGVVFGPTLMRPQEETVAAIMDLKFQNIVVEILIENHEKIFRTSPDTTFAEPTCLSASPPNAPPRQSKRQGQRTKRPVAVYNLCLELEEGDSPSPLKEDPPSSSQDSLSTPSPTTSAAHGPPGLDGNHLAADGGSCGDATATTPSQTRPSMVQWLNMQSPTTPSSNPAGTPPSPRMSPFPLSPAASIVDKLPECVINRKARAVYPCEAEHSSELSFEIGAIFEDVQTSREPGWLEGTLNGKRGLIPQNYVKLL.

A BAR domain is found at 7–262 (EFSDCYLDSP…IRQNPKDQKR (256 aa)). Residues 265–372 (QFTAEGYLYV…WLEALGGKEA (108 aa)) form the PH domain. Residues 389-574 (AQLDKMGFTI…ILIENHEKIF (186 aa)) form the Rho-GAP domain. Disordered regions lie at residues 584–609 (EPTCLSASPPNAPPRQSKRQGQRTKR) and 622–714 (EGDS…PFPL). Basic residues predominate over residues 599-609 (QSKRQGQRTKR). Residues 634–649 (PSSSQDSLSTPSPTTS) are compositionally biased toward low complexity. Positions 673-701 (TATTPSQTRPSMVQWLNMQSPTTPSSNPA) are enriched in polar residues. Residues 702 to 714 (GTPPSPRMSPFPL) are compositionally biased toward pro residues. The 59-residue stretch at 728–786 (VINRKARAVYPCEAEHSSELSFEIGAIFEDVQTSREPGWLEGTLNGKRGLIPQNYVKLL) folds into the SH3 domain.

As to quaternary structure, interacts with PKN3. Interacts with caspase-activated PAK2 proteolytic fragment PAK-2p34; the interaction does not affect ARHGAP10 GTPase activation activity towards RHOA and CDC42. Interacts via its SH3 domain with PTK2/FAK1. Interacts with PTK2B/PYK2; the interaction negatively regulates ARHGAP10 GTPase-activating activity. Interacts with MICAL1 and WDR44; complex formation might transit from GRAF2/ARHGAP10-MICAL1 to GRAF2/ARHGAP10-WDR44 complexes. Phosphorylated on tyrosine residues, probably involving PTK2B/PYK2. As to expression, high levels of expression in brain, testes, liver, heart and kidney.

It is found in the cytoplasm. The protein localises to the perinuclear region. It localises to the cell membrane. The protein resides in the endosome membrane. In terms of biological role, GTPase-activating protein that catalyzes the conversion of active GTP-bound Rho GTPases to their inactive GDP-bound form, thus suppressing various Rho GTPase-mediated cellular processes. Also converts Cdc42 to an inactive GDP-bound state. Essential for PTKB2 regulation of cytoskeletal organization via Rho family GTPases. Inhibits PAK2 proteolytic fragment PAK-2p34 kinase activity and changes its localization from the nucleus to the perinuclear region. Stabilizes PAK-2p34 thereby increasing stimulation of cell death. Associates with MICAL1 on the endosomal membrane to promote Rab8-Rab10-dependent tubule extension. After dissociation with MICAL1, recruits WDR44 which connects the endoplasmic reticulum (ER) with the endosomal tubule, thereby participating in the export of a subset of neosynthesized proteins. The chain is Rho GTPase-activating protein 10 (Arhgap10) from Mus musculus (Mouse).